The primary structure comprises 140 residues: Nucleoside diphosphate kinase (140 aa).

Residues Lys-11, Phe-59, Arg-87, Thr-93, Arg-104, and Asn-114 each contribute to the ATP site. His-117 (pros-phosphohistidine intermediate) is an active-site residue.

It belongs to the NDK family. As to quaternary structure, homotetramer. It depends on Mg(2+) as a cofactor.

Its subcellular location is the cytoplasm. The catalysed reaction is a 2'-deoxyribonucleoside 5'-diphosphate + ATP = a 2'-deoxyribonucleoside 5'-triphosphate + ADP. It carries out the reaction a ribonucleoside 5'-diphosphate + ATP = a ribonucleoside 5'-triphosphate + ADP. In terms of biological role, major role in the synthesis of nucleoside triphosphates other than ATP. The ATP gamma phosphate is transferred to the NDP beta phosphate via a ping-pong mechanism, using a phosphorylated active-site intermediate. This chain is Nucleoside diphosphate kinase, found in Rhizobium johnstonii (strain DSM 114642 / LMG 32736 / 3841) (Rhizobium leguminosarum bv. viciae).